The sequence spans 132 residues: U-scoloptoxin(11)-Sa1a (132 aa).

The signal sequence occupies residues 1-19 (MIRFFAFVLFFATQELILC).

The protein belongs to the scoloptoxin-11 family. In terms of processing, contains 5 disulfide bonds. In terms of tissue distribution, expressed by the venom gland.

The protein localises to the secreted. This chain is U-scoloptoxin(11)-Sa1a, found in Scolopendra alternans (Florida Keys giant centipede).